Consider the following 141-residue polypeptide: Large ribosomal subunit protein uL11 (141 aa).

Belongs to the universal ribosomal protein uL11 family. Part of the ribosomal stalk of the 50S ribosomal subunit. Interacts with L10 and the large rRNA to form the base of the stalk. L10 forms an elongated spine to which L12 dimers bind in a sequential fashion forming a multimeric L10(L12)X complex. One or more lysine residues are methylated.

Its function is as follows. Forms part of the ribosomal stalk which helps the ribosome interact with GTP-bound translation factors. This Prochlorococcus marinus (strain MIT 9211) protein is Large ribosomal subunit protein uL11.